The sequence spans 254 residues: Thiamine thiazole synthase (254 aa).

NAD(+) contacts are provided by residues serine 36, 55 to 56 (EK), glycine 63, valine 127, and 154 to 156 (HVD). Fe cation contacts are provided by aspartate 156 and histidine 171. An NAD(+)-binding site is contributed by methionine 219. Residue arginine 229 participates in glycine binding.

Belongs to the THI4 family. As to quaternary structure, homooctamer; tetramer of dimers. The cofactor is Fe(2+).

The enzyme catalyses hydrogen sulfide + glycine + NAD(+) = ADP-5-ethyl-4-methylthiazole-2-carboxylate + nicotinamide + 3 H2O + H(+). It functions in the pathway cofactor biosynthesis; thiamine diphosphate biosynthesis. Involved in the biosynthesis of the thiazole moiety of thiamine. Catalyzes the conversion of NAD and glycine to adenosine diphosphate 5-(2-hydroxyethyl)-4-methylthiazole-2-carboxylate (ADT), an adenylated thiazole intermediate, using free sulfide as a source of sulfur. The chain is Thiamine thiazole synthase from Methanoculleus marisnigri (strain ATCC 35101 / DSM 1498 / JR1).